The chain runs to 913 residues: Proline and serine-rich protein 1 (913 aa).

M1 bears the N-acetylmethionine mark. Disordered stretches follow at residues V233–S291, A488–K507, S592–L618, and D888–Q913. Residues L251–G275 show a composition bias toward polar residues. The segment covering S276–S291 has biased composition (low complexity). Residues A488–N506 are compositionally biased toward polar residues. The span at Y893 to Q913 shows a compositional bias: polar residues.

In terms of assembly, interacts with TET2 and OGT; this interaction mediates TET2 O-GlcNAcylation and stability by promoting the interaction between OGT and TET2. Interacts with KDM6A. Interacts with TET1. In terms of processing, glycosylated. Interaction with OGT leads to GlcNAcylation.

Mediates OGT interaction with and O-GlcNAcylation of TET2 to control TET2 stabilization at enhancers and CpG islands (CGIs). The protein is Proline and serine-rich protein 1 of Mus musculus (Mouse).